A 504-amino-acid polypeptide reads, in one-letter code: Glutamate--tRNA ligase (504 aa).

Positions 27-37 match the 'HIGH' region motif; the sequence is PSPTGTPHVGL. The 'KMSKS' region signature appears at 271 to 275; sequence KLSKR. Lys274 lines the ATP pocket.

Belongs to the class-I aminoacyl-tRNA synthetase family. Glutamate--tRNA ligase type 1 subfamily. In terms of assembly, monomer.

It localises to the cytoplasm. It carries out the reaction tRNA(Glu) + L-glutamate + ATP = L-glutamyl-tRNA(Glu) + AMP + diphosphate. In terms of biological role, catalyzes the attachment of glutamate to tRNA(Glu) in a two-step reaction: glutamate is first activated by ATP to form Glu-AMP and then transferred to the acceptor end of tRNA(Glu). In Arthrobacter sp. (strain FB24), this protein is Glutamate--tRNA ligase.